A 533-amino-acid chain; its full sequence is Flavin-containing monooxygenase 5 (533 aa).

Arg-5 is subject to Dimethylated arginine. FAD is bound by residues 10-14 (GAGAS), Glu-33, and 41-42 (LW). Ser-54 carries the post-translational modification Phosphoserine. Tyr-56 carries the post-translational modification Phosphotyrosine. At Ser-58 the chain carries Phosphoserine. 62-63 (NT) serves as a coordination point for FAD. 196-199 (SGGD) contacts NADP(+). Ser-280 is modified (phosphoserine). Thr-284 is subject to Phosphothreonine. Phosphoserine is present on Ser-401. The helical transmembrane segment at 513–533 (MMTMGKFMLAIAFLAIAVVYF) threads the bilayer.

It belongs to the FMO family. It depends on FAD as a cofactor. Kidney and liver.

It is found in the microsome membrane. The protein localises to the endoplasmic reticulum membrane. The enzyme catalyses N,N-dimethylaniline + NADPH + O2 + H(+) = N,N-dimethylaniline N-oxide + NADP(+) + H2O. The catalysed reaction is NADPH + O2 + H(+) = H2O2 + NADP(+). It catalyses the reaction heptan-2-one + NADPH + O2 + H(+) = pentyl acetate + NADP(+) + H2O. It carries out the reaction octan-3-one + NADPH + O2 + H(+) = pentyl propanoate + NADP(+) + H2O. The enzyme catalyses octan-3-one + NADPH + O2 + H(+) = ethyl hexanoate + NADP(+) + H2O. The catalysed reaction is hexan-3-one + NADPH + O2 + H(+) = ethyl butanoate + NADP(+) + H2O. It catalyses the reaction hexan-3-one + NADPH + O2 + H(+) = propyl propanoate + NADP(+) + H2O. It carries out the reaction heptan-4-one + NADPH + O2 + H(+) = propyl butanoate + NADP(+) + H2O. The enzyme catalyses (2E)-geranial + NADPH + O2 + H(+) = (1E)-2,6-dimethylhepta-1,5-dien-1-yl formate + NADP(+) + H2O. The catalysed reaction is sulcatone + NADPH + O2 + H(+) = 4-methylpent-3-en-1-yl acetate + NADP(+) + H2O. Acts as a Baeyer-Villiger monooxygenase on a broad range of substrates. Catalyzes the insertion of an oxygen atom into a carbon-carbon bond adjacent to a carbonyl, which converts ketones to esters. Active on diverse carbonyl compounds, whereas soft nucleophiles are mostly non- or poorly reactive. In contrast with other forms of FMO it is non- or poorly active on 'classical' substrates such as drugs, pesticides, and dietary components containing soft nucleophilic heteroatoms. Able to oxidize drug molecules bearing a carbonyl group on an aliphatic chain, such as nabumetone and pentoxifylline. Also, in the absence of substrates, shows slow but yet significant NADPH oxidase activity. Acts as a positive modulator of cholesterol biosynthesis as well as glucose homeostasis, promoting metabolic aging via pleiotropic effects. This is Flavin-containing monooxygenase 5 (FMO5) from Oryctolagus cuniculus (Rabbit).